We begin with the raw amino-acid sequence, 702 residues long: MA3 DOMAIN-CONTAINING TRANSLATION REGULATORY FACTOR 3 (702 aa).

Residues 1–100 form a disordered region; sequence MEGFLTDQQR…PNDPNYDSGE (100 aa). Over residues 53–65 the composition is skewed to basic residues; that stretch reads VKHRRSHAGRSIR. The segment covering 81 to 91 has biased composition (basic and acidic residues); that stretch reads IDTDGDYHIDP. The region spanning 116-237 is the MI 1 domain; sequence DYKKAAASII…PPAFLPRAAK (122 aa). Residues 267 to 274 carry the Nuclear localization signal 1 motif; the sequence is ERRWGGQT. MI domains are found at residues 280 to 401, 414 to 535, and 577 to 697; these read EVKK…PSGE, RFKE…EISS, and DAKD…SLTE. A Nuclear localization signal 2 motif is present at residues 615 to 622; that stretch reads VKKALVMG.

This sequence belongs to the PDCD4 family. Interacts with EIN2, ETR2 and EIN4. Binds to EIF4A1. The association with ribosomes is modulated by cellular energy status and TOR activity. In terms of tissue distribution, mostly expressed in vegetative tissues, such as leaves and stems, and, to a lower extent, in roots and reproductive tissues, such as flower buds and flowers. Expressed in seedlings, roots, cauline leaf tips and flowers.

It is found in the nucleus. The protein resides in the cytoplasm. Its subcellular location is the cytosol. Its function is as follows. Involved in target of rapamycin (TOR)-regulated translation control, especially under energy-deficient conditions. Involved in the regulation of the ethylene-mediated signaling pathway. Involved in salt stress responses. Reduced cotyledons size and early flowering. This chain is MA3 DOMAIN-CONTAINING TRANSLATION REGULATORY FACTOR 3, found in Arabidopsis thaliana (Mouse-ear cress).